Here is a 548-residue protein sequence, read N- to C-terminus: MAAKDVKFGNDARVKMLRGVNVLADAVKVTLGPKGRNVVLDKSFGAPTITKDGVSVAREIELEDKFENMGAQMVKEVASKANDAAGDGTTTATVLAQAIVNEGLKAVAAGMNPMDLKRGIDKAVVAAVEELKALSVPCSDSKAIAQVGTISANSDETVGKLIAEAMDKVGKEGVITVEDGTGLEDELDVVEGMQFDRGYLSPYFINKPDTGAVELESPFILLADKKISNIREMLPVLEAVAKAGKPLVIIAEDVEGEALATLVVNTMRGIVKVAAVKAPGFGDRRKAMLQDIATLTGGTVISEEIGMELEKATLEDLGQAKRVVINKDTTTIIDGVGEEAAIQGRVAQIRKQIEEATSDYDREKLQERVAKLAGGVAVIKVGAATEVEMKEKKARVDDALHATRAAVEEGVVAGGGVALVRVAAKIAGLTGQNEDQNVGIKVALRAMEAPLRQIVSNAGEEPSVVANNVKAGDGNYGYNAATEEYGNMIDFGILDPTKVTRSALQYAASVAGLMITTECMVTDLPKGDAPDLGAAGGMGGMGGMGGMM.

ATP-binding positions include 30 to 33 (TLGP), K51, 87 to 91 (DGTTT), G415, 479 to 481 (NAA), and D495.

Belongs to the chaperonin (HSP60) family. In terms of assembly, forms a cylinder of 14 subunits composed of two heptameric rings stacked back-to-back. Interacts with the co-chaperonin GroES.

It localises to the cytoplasm. It carries out the reaction ATP + H2O + a folded polypeptide = ADP + phosphate + an unfolded polypeptide.. Together with its co-chaperonin GroES, plays an essential role in assisting protein folding. The GroEL-GroES system forms a nano-cage that allows encapsulation of the non-native substrate proteins and provides a physical environment optimized to promote and accelerate protein folding. The polypeptide is Chaperonin GroEL (Klebsiella aerogenes (strain ATCC 13048 / DSM 30053 / CCUG 1429 / JCM 1235 / KCTC 2190 / NBRC 13534 / NCIMB 10102 / NCTC 10006 / CDC 819-56) (Enterobacter aerogenes)).